A 376-amino-acid polypeptide reads, in one-letter code: Chaperone protein DnaJ (376 aa).

One can recognise a J domain in the interval 5 to 70 (DYYEILGVER…QKRAAYDKFG (66 aa)). The segment at 131–209 (GVSKEIKVPT…CHGDGRVQKT (79 aa)) adopts a CR-type zinc-finger fold. Residues Cys-144, Cys-147, Cys-161, Cys-164, Cys-183, Cys-186, Cys-197, and Cys-200 each contribute to the Zn(2+) site. 4 CXXCXGXG motif repeats span residues 144–151 (CDECHGSG), 161–168 (CPTCHGSG), 183–190 (CPHCHGKG), and 197–204 (CRKCHGDG).

This sequence belongs to the DnaJ family. In terms of assembly, homodimer. It depends on Zn(2+) as a cofactor.

Its subcellular location is the cytoplasm. In terms of biological role, participates actively in the response to hyperosmotic and heat shock by preventing the aggregation of stress-denatured proteins and by disaggregating proteins, also in an autonomous, DnaK-independent fashion. Unfolded proteins bind initially to DnaJ; upon interaction with the DnaJ-bound protein, DnaK hydrolyzes its bound ATP, resulting in the formation of a stable complex. GrpE releases ADP from DnaK; ATP binding to DnaK triggers the release of the substrate protein, thus completing the reaction cycle. Several rounds of ATP-dependent interactions between DnaJ, DnaK and GrpE are required for fully efficient folding. Also involved, together with DnaK and GrpE, in the DNA replication of plasmids through activation of initiation proteins. The chain is Chaperone protein DnaJ from Tolumonas auensis (strain DSM 9187 / NBRC 110442 / TA 4).